Consider the following 340-residue polypeptide: Uridine nucleosidase (340 aa).

Residue His-254 is part of the active site.

The protein belongs to the IUNH family.

It is found in the cytoplasm. Its subcellular location is the nucleus. The catalysed reaction is uridine + H2O = D-ribose + uracil. Functionally, also acts on cytidine. The protein is Uridine nucleosidase (URH1) of Saccharomyces cerevisiae (strain ATCC 204508 / S288c) (Baker's yeast).